Consider the following 197-residue polypeptide: Potassium-transporting ATPase KdpC subunit (197 aa).

A helical membrane pass occupies residues 7 to 27; sequence PAFISLILFTLLFGLIYPLTV.

The protein belongs to the KdpC family. In terms of assembly, the system is composed of three essential subunits: KdpA, KdpB and KdpC.

It localises to the cell inner membrane. Functionally, part of the high-affinity ATP-driven potassium transport (or Kdp) system, which catalyzes the hydrolysis of ATP coupled with the electrogenic transport of potassium into the cytoplasm. This subunit acts as a catalytic chaperone that increases the ATP-binding affinity of the ATP-hydrolyzing subunit KdpB by the formation of a transient KdpB/KdpC/ATP ternary complex. This chain is Potassium-transporting ATPase KdpC subunit, found in Beijerinckia indica subsp. indica (strain ATCC 9039 / DSM 1715 / NCIMB 8712).